Consider the following 391-residue polypeptide: Oxytocin receptor (391 aa).

Residues 1 to 38 are Extracellular-facing; sequence MEGAFAANWSAEAVNGSAAPPGTEGNRTAGPPQRNEAL. 3 N-linked (GlcNAc...) asparagine glycosylation sites follow: Asn-8, Asn-15, and Asn-26. A helical membrane pass occupies residues 39-63; it reads ARVEVAVLCLILFLALSGNACVLLA. Residues 64–74 are Cytoplasmic-facing; sequence LRTTRHKHSRL. Residues 75–97 form a helical membrane-spanning segment; sequence FFFMKHLSIADLVVAVFQVLPQL. The Extracellular segment spans residues 98–113; it reads LWDITFRFYGPDLLCR. Cys-112 and Cys-187 are joined by a disulfide. Residues 114-135 form a helical membrane-spanning segment; it reads LVKYLQVVGMFASTYLLLLMSL. At 136–154 the chain is on the cytoplasmic side; sequence DRCLAICQPLRSLSRRTDR. A helical membrane pass occupies residues 155-175; sequence LAVLVTWLGCLVASAPQVHIF. Residues 176 to 202 lie on the Extracellular side of the membrane; the sequence is SLREVADGVFDCWAVFIQPWGPKAYIT. The chain crosses the membrane as a helical span at residues 203–225; sequence WITLAVYIVPVIVLATCYGLISF. At 226 to 277 the chain is on the cytoplasmic side; sequence KIWQNLRLKTAAAAAEAAAGAEGEAADWAGRAILARVSNVKLISKAKIRTVK. The helical transmembrane segment at 278–296 threads the bilayer; it reads MTFIVVLAFIVCWTPFFFV. At 297-311 the chain is on the extracellular side; that stretch reads QMWSVWDADAPKEAS. Residues 312-334 traverse the membrane as a helical segment; it reads PFIIAMLLASLNSCCNPWIYMLF. Residues 335-391 are Cytoplasmic-facing; it reads TGHLFQELVQRFLCCSFRRLKGSRPGETSVSKKSNSSTFVLSQYSSSQRRCSQPSTL. A phosphoserine mark is found at Ser-368 and Ser-370.

It belongs to the G-protein coupled receptor 1 family. Vasopressin/oxytocin receptor subfamily.

It is found in the cell membrane. Its function is as follows. Receptor for oxytocin. The activity of this receptor is mediated by G proteins which activate a phosphatidylinositol-calcium second messenger system. The protein is Oxytocin receptor (OXTR) of Bos taurus (Bovine).